The sequence spans 32 residues: Ovostatin (32 aa).

Positions 27-30 (CGEQ) form a cross-link, isoglutamyl cysteine thioester (Cys-Gln).

This sequence belongs to the protease inhibitor I39 (alpha-2-macroglobulin) family. In terms of assembly, homotetramer, which consists of two pairs of disulfide-linked chains.

The protein resides in the secreted. Functionally, is able to inhibit all four classes of proteinases by a unique 'trapping' mechanism. This protein has a peptide stretch, called the 'bait region' which contains specific cleavage sites for different proteinases. When a proteinase cleaves the bait region, a conformational change is induced in the protein which traps the proteinase. The entrapped enzyme remains active against low molecular weight substrates (activity against high molecular weight substrates is greatly reduced). Following cleavage in the bait region a thioester bond is hydrolyzed and mediates the covalent binding of the protein to the proteinase. The protein is Ovostatin of Anas platyrhynchos (Mallard).